We begin with the raw amino-acid sequence, 273 residues long: Putative esterase/lipase 3 (273 aa).

The active site involves H34. The Charge relay system role is filled by S100.

It belongs to the lipase/esterase LIP3/BchO family.

This chain is Putative esterase/lipase 3, found in Mycoplasma genitalium (strain ATCC 33530 / DSM 19775 / NCTC 10195 / G37) (Mycoplasmoides genitalium).